We begin with the raw amino-acid sequence, 475 residues long: Ankyrin repeat, SAM and basic leucine zipper domain-containing protein 1 (475 aa).

Positions 1–22 are disordered; that stretch reads MAAGALRGLPVAGGGESSESED. Phosphoserine is present on residues S17, S18, and S20. 6 ANK repeats span residues 45–74, 78–107, 110–144, 148–177, 181–210, and 214–243; these read EKKE…SVDS, YGWT…NASF, DKQT…DPNV, RLMT…EVNT, NGYT…NKML, and DGKM…PLEG. An SAM domain is found at 272–334; that stretch reads SYTAFGDLEV…KILATLKELQ (63 aa).

As to quaternary structure, interacts with DDX4, PIWIL1, RANBP9 and TDRD1.

The protein resides in the cytoplasm. In terms of biological role, plays a central role during spermatogenesis by repressing transposable elements and preventing their mobilization, which is essential for the germline integrity. Acts via the piRNA metabolic process, which mediates the repression of transposable elements during meiosis by forming complexes composed of piRNAs and Piwi proteins and governs the methylation and subsequent repression of transposons. Its association with pi-bodies suggests a participation in the primary piRNAs metabolic process. Required prior to the pachytene stage to facilitate the production of multiple types of piRNAs, including those associated with repeats involved in the regulation of retrotransposons. May act by mediating protein-protein interactions during germ cell maturation. In Colobus guereza (Mantled guereza), this protein is Ankyrin repeat, SAM and basic leucine zipper domain-containing protein 1 (ASZ1).